Consider the following 343-residue polypeptide: tRNA N6-adenosine threonylcarbamoyltransferase (343 aa).

Fe cation contacts are provided by His114 and His118. Residues Leu137–Gly141, Asp171, Gly184, Asp188, and Asn278 contribute to the substrate site. Position 306 (Asp306) interacts with Fe cation.

It belongs to the KAE1 / TsaD family. Fe(2+) serves as cofactor.

The protein localises to the cytoplasm. It carries out the reaction L-threonylcarbamoyladenylate + adenosine(37) in tRNA = N(6)-L-threonylcarbamoyladenosine(37) in tRNA + AMP + H(+). Its function is as follows. Required for the formation of a threonylcarbamoyl group on adenosine at position 37 (t(6)A37) in tRNAs that read codons beginning with adenine. Is involved in the transfer of the threonylcarbamoyl moiety of threonylcarbamoyl-AMP (TC-AMP) to the N6 group of A37, together with TsaE and TsaB. TsaD likely plays a direct catalytic role in this reaction. This chain is tRNA N6-adenosine threonylcarbamoyltransferase, found in Acidothermus cellulolyticus (strain ATCC 43068 / DSM 8971 / 11B).